Here is a 150-residue protein sequence, read N- to C-terminus: Endoribonuclease YbeY (150 aa).

3 residues coordinate Zn(2+): H112, H116, and H122.

This sequence belongs to the endoribonuclease YbeY family. Requires Zn(2+) as cofactor.

The protein localises to the cytoplasm. Functionally, single strand-specific metallo-endoribonuclease involved in late-stage 70S ribosome quality control and in maturation of the 3' terminus of the 16S rRNA. The protein is Endoribonuclease YbeY of Geobacter metallireducens (strain ATCC 53774 / DSM 7210 / GS-15).